The sequence spans 495 residues: Cyclic GMP-AMP synthase (495 aa).

Positions 1–128 (MAARRGKSTR…AGATELAAPA (128 aa)) are disordered. The interval 1–134 (MAARRGKSTR…AAPARMEAPP (134 aa)) is DNA-binding. An N6-acetyllysine modification is found at K7. At S13 the chain carries Phosphoserine. Composition is skewed to basic and acidic residues over residues 52 to 76 (CRRE…RAED) and 105 to 116 (RAREARSARELR). N6-acetyllysine is present on K56. Residue S57 is modified to Phosphoserine. Residues 57–68 (SGPDPREKPQVR) are required for association with the cell membrane. The interval 103–134 (SCRAREARSARELRPQAGATELAAPARMEAPP) is required for activation upon DNA viral infection. A Nuclear export signal motif is present at residues 143–148 (LEKVRL). The residue at position 145 (K145) is an N6-lactoyllysine. Residues 147 to 190 (RLSRHEISEAAEVVNWVVEHLLRRLQGGESEFKGVALLRTGSYY) form a DNA-binding region. E165 is subject to PolyADP-ribosyl glutamic acid. T186 serves as a coordination point for GTP. A Phosphoserine modification is found at S188. S188 is a binding site for ATP. Position 190 is a phosphotyrosine (Y190). Positions 200 and 202 each coordinate Mg(2+). D202 contacts 2',3'-cGAMP. Residue K206 forms a Glycyl lysine isopeptide (Lys-Gly) (interchain with G-Cter in SUMO) linkage. K260 is covalently cross-linked (Glycyl lysine isopeptide (Lys-Gly) (interchain with G-Cter in ubiquitin)). At E261 the chain carries 5-glutamyl polyglutamate. The Nuclear localization signal signature appears at 268-278 (GVTVERKRRGS). Residue S278 is modified to Phosphoserine. D294 lines the GTP pocket. D294 contacts Mg(2+). A 2',3'-cGAMP-binding site is contributed by D294. The interaction with collided ribosomes stretch occupies residues 316 to 357 (SQWLGAKVKNNLKRQPFYLVPKHAKEGSGFQEETWRLSFSHI). K322 participates in a covalent cross-link: Glycyl lysine isopeptide (Lys-Gly) (interchain with G-Cter in SUMO); alternate. K322 participates in a covalent cross-link: Glycyl lysine isopeptide (Lys-Gly) (interchain with G-Cter in ubiquitin); alternate. 2',3'-cGAMP contacts are provided by K337 and R351. 351–358 (RLSFSHIE) serves as a coordination point for GTP. E358 contacts ATP. N6-acetyllysine is present on K359. Residue K359 forms a Glycyl lysine isopeptide (Lys-Gly) (interchain with G-Cter in SUMO); alternate linkage. K359 is covalently cross-linked (Glycyl lysine isopeptide (Lys-Gly) (interchain with G-Cter in ubiquitin); alternate). The tract at residues 359–382 (KDILKNHGQSKTCCEIDGVKCCRK) is DNA-binding. Position 365 (H365) interacts with Zn(2+). K369 is modified (N6-acetyllysine). Residue K369 forms a Glycyl lysine isopeptide (Lys-Gly) (interchain with G-Cter in SUMO) linkage. Residues C371, C372, and C379 each contribute to the Zn(2+) site. Residues C379 and C380 are each lipidated (S-palmitoyl cysteine). Residues K386, K389, K396, and K397 each participate in a glycyl lysine isopeptide (Lys-Gly) (interchain with G-Cter in ubiquitin) cross-link. The residue at position 389 (K389) is an N6-acetyllysine. Residue K389 participates in ATP binding. S410 is modified (phosphoserine). Residue 410 to 414 (SYHVK) participates in ATP binding. C449 carries S-palmitoyl cysteine lipidation. Residue K481 is modified to N6-methyllysine.

It belongs to the mab-21 family. Monomer in the absence of DNA. Homodimer in presence of dsDNA: forms a 2:2 dimer with two enzymes binding to two DNA molecules. Interacts with nucleosomes; interaction is mainly mediated via histones H2A and H2B and inactivates the nucleotidyltransferase activity by blocking DNA-binding and subsequent activation. Interacts with PQBP1 (via WW domain). Interacts with TRIM14; this interaction recruits USP14, leading to deubiquitinate and stabilize CGAS and promote type I interferon production. Interacts with ZCCHC3; promoting sensing of dsDNA by CGAS. Interacts (when not monomethylated) with (poly-ADP-ribosylated) PARP1; interaction takes place in the nucleus and prevents the formation of the PARP1-TIMELESS complex. Interacts (when monomethylated) with SGF29; interaction with SGF29 prevents interaction with PARP1. Interacts with PCBP2; preventing the formation of liquid-like droplets in which CGAS is activated. Interacts with IRGM; promoting CGAS degradation. Requires Mg(2+) as cofactor. Mn(2+) serves as cofactor. Zn(2+) is required as a cofactor. The N-terminal disordered part (1-134) is phosphorylated by AURKB during the G2-M transition, blocking CGAS liquid phase separation and preventing activation. Phosphorylation at Tyr-190 by BLK promotes cytosolic retention. Localizes into the nucleus following dephosphorylation at Tyr-190. Phosphorylation at Ser-410 activates the nucleotidyltransferase activity. Dephosphorylation at Ser-410 by PPP6C impairs its ability to bind GTP, thereby inactivating it. Phosphorylation at Ser-188 by PRKDC inhibits its cyclic GMP-AMP synthase activity by impairing homodimerization and activation. Phosphorylation at Ser-278 by AKT (AKT1, AKT2 or AKT3) suppresses the nucleotidyltransferase activity. Phosphorylation at Ser-278 by CDK1 during mitosis leads to its inhibition, thereby preventing CGAS activation by self-DNA during mitosis. Dephosphorylated at Ser-278 by protein phosphatase PP1 upon mitotic exit. Post-translationally, ubiquitinated at Lys-389 via 'Lys-48'-linked polyubiquitin chains, leading to its SQSTM1-mediated autophagic degradation. Interaction with TRIM14 promotes recruitment of USP14, leading to deubiquitinate Lys-389 and stabilize CGAS. Ubiquitinated at Lys-359 by RNF185 via 'Lys-27'-linked polyubiquitination, promoting CGAS cyclic GMP-AMP synthase activity. Monoubiquitination at Lys-322 by TRIM56 promotes oligomerization and subsequent activation. Monoubiquitination by TRIM41 promotes CGAS activation. Ubiquitination at Lys-260 via 'Lys-48'-linked polyubiquitination promotes its degradation. Deubiquitination at Lys-260 by USP29 promotes its stabilization. Deubiquitinated by USP27X, promoting its stabilization. Ubiquitinated at Lys-386 via 'Lys-63'-linked polyubiquitin chains by MARCHF8, leading to the inhibition of its DNA binding ability. In cycling cells, nucleosome-bound CGAS is ubiquitinated at Lys-396 and Lys-397 via 'Lys-48'-linked polyubiquitin chains by the ECS(SPSB3) complex, leading to its degradation: ubiquitination and degradation of nuclear CGAS during G1 and G2 phases is required to promote low intranuclear CGAS abundance before the next mitotic cycle. In terms of processing, sumoylated at Lys-206 by TRIM38 in uninfected cells and during the early phase of viral infection, promoting its stability by preventing ubiquitination at Lys-260 and subsequent degradation. Desumoylated by SENP2 during the late phase of viral infection. Sumoylation at Lys-322, Lys-359 and Lys-369 prevents DNA-binding, oligomerization and nucleotidyltransferase activity. Desumoylation at Lys-322, Lys-359 and Lys-369 by SENP7 relieves inhibition and activates CGAS. Polyglutamylated by TTLL6 at Glu-261, leading to impair DNA-binding activity. Deglutamylated by AGBL5/CCP5 and AGBL6/CCP6. Post-translationally, acetylation at Lys-359, Lys-369 and Lys-389 inhibits the cyclic GMP-AMP synthase activity. Deacetylated upon cytosolic DNA challenge such as viral infections. Acetylation by KAT5 increases the cyclic GMP-AMP synthase activity by promoting DNA-binding and subsequent activation. In terms of processing, proteolytically cleaved by apoptotic caspases during apoptosis, leading to its inactivation. The damage of the nucleus and the mitochondria during apoptosis leads to leakage of nuclear and mitochondrial DNA, which activate CGAS: cleavage and inactivation during apoptosis in required to prevent cytokine overproduction. Cleaved by CASP7 and CASP3 during virus-induced apoptosis, thereby inactivating it and preventing cytokine overproduction. Cleaved by CASP1 upon DNA virus infection; the cleavage impairs cGAMP production. Also cleaved by the pyroptotic CASP4 during non-canonical inflammasome activation; does not cut at the same sites than CASP1. Degraded via selective autophagy following interaction with IRGM. IRGM promotes CGAS recruitment to autophagosome membranes, promoting its SQSTM1/p62-dependent autophagic degradation. Post-translationally, poly-ADP-ribosylation at Glu-165 by PARP1 impairs DNA-binding, thereby preventing the cyclic GMP-AMP synthase activity. In terms of processing, palmitoylation at Cys-449 by ZDHHC18 impairs DNA-binding, thereby preventing the cyclic GMP-AMP synthase activity. Palmitoylation at Cys-379 and Cys-380 by ZDHHC9 promotes homodimerization and cyclic GMP-AMP synthase activity. Depalmitoylation at Cys-379 and Cys-380 by LYPLAL1 impairs homodimerization and cyclic GMP-AMP synthase activity. Monomethylated at Lys-481 by SETD7. Monomethylation promotes interaction with SGF29, preventing interaction between PARP1 nad SGF29. Demethylation by RIOX1 promotes interaction with PARP1, followed by PARP1 inactivation. Post-translationally, lactylation by AARS2 prevents ability to undergo liquid-liquid phase separation (LLPS), thereby inhibiting CGAS activation.

The protein resides in the nucleus. Its subcellular location is the chromosome. It localises to the cell membrane. It is found in the cytoplasm. The protein localises to the cytosol. The enzyme catalyses GTP + ATP = 2',3'-cGAMP + 2 diphosphate. The catalysed reaction is GTP + ATP = pppGp(2'-5')A + diphosphate. It catalyses the reaction pppGp(2'-5')A = 2',3'-cGAMP + diphosphate. With respect to regulation, the enzyme activity is strongly increased by double-stranded DNA (dsDNA), but not by single-stranded DNA or RNA. DNA-binding induces the formation of liquid-like droplets in which CGAS is activated. Liquid-like droplets also create a selective environment that restricts entry of negative regulators, such as TREX1 or BANF1/BAF, allowing sensing of DNA. A number of mechanisms exist to restrict its activity toward self-DNA. The nucleotidyltransferase activity is inhibited in the nucleus via its association with nucleosomes: interacts with the acidic patch of histones H2A and H2B, thereby blocking DNA-binding and subsequent activation. CGAS is also inactive when associated with mitotic chromatin. Chromatin-bound CGAS cannot be activated by exogenous DNA in mitotic cells: phosphorylation of the N-terminal disordered part by AURKB during the G2-M transition blocks CGAS liquid phase separation and activation. Activity toward self-DNA is inhibited by BANF1/BAF upon acute loss of nuclear membrane integrity: BANF1/BAF acts by outcompeting CGAS for DNA-binding, thereby preventing CGAS activation. DNA-induced activation at micronuclei is also limited by TREX1, which degrades micronuclear DNA upon nuclear envelope rupture, thereby preventing CGAS activation. CGAS can be released from nucleosomes and activated by MRE11 component of the MRN complex, which displaces CGAS from acidic-patch-mediated sequestration. Acetylation at Lys-359, Lys-369 and Lys-389 inhibits the cyclic GMP-AMP synthase activity. Acetylation by KAT5 increases the cyclic GMP-AMP synthase activity by promoting DNA-binding and subsequent activation. Phosphorylation at Ser-278 suppresses the nucleotidyltransferase activity. Phosphorylation at Ser-410 promotes the cyclic GMP-AMP synthase activity. Phosphorylation at Ser-188 inhibits its cyclic GMP-AMP synthase activity. Ubiquitination at Lys-359 via 'Lys-27'-linked polyubiquitination enhances the cyclic GMP-AMP synthase activity. Monoubiquitination at Lys-322 promotes oligomerization and subsequent activation. Sumoylation at Lys-322, Lys-359 and Lys-369 prevents DNA-binding, oligomerization and nucleotidyltransferase activity. The enzyme activity is impaired by the cleavage by CASP1. In addition to DNA, also activated by collided ribosomes upon translation stress: specifically binds collided ribosomes, promoting its activation and triggering type-I interferon production. Functionally, nucleotidyltransferase that catalyzes the formation of cyclic GMP-AMP (2',3'-cGAMP) from ATP and GTP and plays a key role in innate immunity. Catalysis involves both the formation of a 2',5' phosphodiester linkage at the GpA step and the formation of a 3',5' phosphodiester linkage at the ApG step, producing c[G(2',5')pA(3',5')p]. Acts as a key DNA sensor: directly binds double-stranded DNA (dsDNA), inducing the formation of liquid-like droplets in which CGAS is activated, leading to synthesis of 2',3'-cGAMP, a second messenger that binds to and activates STING1, thereby triggering type-I interferon production. Preferentially binds long dsDNA (around 45 bp) and forms ladder-like networks that function cooperatively to stabilize individual cGAS-dsDNA complexes. Acts as a key foreign DNA sensor, the presence of double-stranded DNA (dsDNA) in the cytoplasm being a danger signal that triggers the immune responses. Has antiviral activity by sensing the presence of dsDNA from DNA viruses in the cytoplasm. Also acts as an innate immune sensor of infection by retroviruses by detecting the presence of reverse-transcribed DNA in the cytosol. Detection of retroviral reverse-transcribed DNA in the cytosol may be indirect and be mediated via interaction with PQBP1, which directly binds reverse-transcribed retroviral DNA. Also detects the presence of DNA from bacteria. 2',3'-cGAMP can be transferred from producing cells to neighboring cells through gap junctions, leading to promote STING1 activation and convey immune response to connecting cells. 2',3'-cGAMP can also be transferred between cells by virtue of packaging within viral particles contributing to IFN-induction in newly infected cells in a cGAS-independent but STING1-dependent manner. Also senses the presence of neutrophil extracellular traps (NETs) that are translocated to the cytosol following phagocytosis, leading to synthesis of 2',3'-cGAMP. In addition to foreign DNA, can also be activated by endogenous nuclear or mitochondrial DNA. When self-DNA leaks into the cytosol during cellular stress (such as mitochondrial stress, DNA damage, mitotic arrest or senescence), or is present in form of cytosolic micronuclei, CGAS is activated leading to a state of sterile inflammation. Acts as a regulator of cellular senescence by binding to cytosolic chromatin fragments that are present in senescent cells, leading to trigger type-I interferon production via STING1 and promote cellular senescence. Also involved in the inflammatory response to genome instability and double-stranded DNA breaks: acts by localizing to micronuclei arising from genome instability. Micronuclei, which are frequently found in cancer cells, consist of chromatin surrounded by their own nuclear membrane: following breakdown of the micronuclear envelope, a process associated with chromothripsis, CGAS binds self-DNA exposed to the cytosol, leading to 2',3'-cGAMP synthesis and subsequent activation of STING1 and type-I interferon production. In a healthy cell, CGAS is however kept inactive even in cellular events that directly expose it to self-DNA, such as mitosis, when cGAS associates with chromatin directly after nuclear envelope breakdown or remains in the form of postmitotic persistent nuclear cGAS pools bound to chromatin. Nuclear CGAS is inactivated by chromatin via direct interaction with nucleosomes, which block CGAS from DNA binding and thus prevent CGAS-induced autoimmunity. Also acts as a suppressor of DNA repair in response to DNA damage: inhibits homologous recombination repair by interacting with PARP1, the CGAS-PARP1 interaction leading to impede the formation of the PARP1-TIMELESS complex. In addition to DNA, also sense translation stress: in response to translation stress, translocates to the cytosol and associates with collided ribosomes, promoting its activation and triggering type-I interferon production. The protein is Cyclic GMP-AMP synthase of Sus scrofa (Pig).